The following is a 483-amino-acid chain: Alginate biosynthesis protein AlgA (483 aa).

This sequence belongs to the mannose-6-phosphate isomerase type 2 family. In terms of assembly, monomer. Requires Co(2+) as cofactor.

The enzyme catalyses D-mannose 6-phosphate = D-fructose 6-phosphate. The catalysed reaction is alpha-D-mannose 1-phosphate + GTP + H(+) = GDP-alpha-D-mannose + diphosphate. Its pathway is nucleotide-sugar biosynthesis; GDP-alpha-D-mannose biosynthesis; GDP-alpha-D-mannose from alpha-D-mannose 1-phosphate (GTP route): step 1/1. It participates in nucleotide-sugar biosynthesis; GDP-alpha-D-mannose biosynthesis; alpha-D-mannose 1-phosphate from D-fructose 6-phosphate: step 1/2. Functionally, produces a precursor for alginate polymerization. The alginate layer provides a protective barrier against host immune defenses and antibiotics. This Pseudomonas fluorescens protein is Alginate biosynthesis protein AlgA (algA).